The chain runs to 132 residues: Small ribosomal subunit protein uS9 (132 aa).

The tract at residues Gly-104 to Arg-132 is disordered. Positions Lys-113 to Arg-132 are enriched in basic residues.

Belongs to the universal ribosomal protein uS9 family.

The polypeptide is Small ribosomal subunit protein uS9 (Natranaerobius thermophilus (strain ATCC BAA-1301 / DSM 18059 / JW/NM-WN-LF)).